The following is a 1072-amino-acid chain: DNA-directed RNA polymerase subunit beta (1072 aa).

This sequence belongs to the RNA polymerase beta chain family. In terms of assembly, in plastids the minimal PEP RNA polymerase catalytic core is composed of four subunits: alpha, beta, beta', and beta''. When a (nuclear-encoded) sigma factor is associated with the core the holoenzyme is formed, which can initiate transcription.

It localises to the plastid. Its subcellular location is the chloroplast. It catalyses the reaction RNA(n) + a ribonucleoside 5'-triphosphate = RNA(n+1) + diphosphate. Its function is as follows. DNA-dependent RNA polymerase catalyzes the transcription of DNA into RNA using the four ribonucleoside triphosphates as substrates. The chain is DNA-directed RNA polymerase subunit beta from Oenothera elata subsp. hookeri (Hooker's evening primrose).